We begin with the raw amino-acid sequence, 578 residues long: MKASRFFIGTLKEAPADAEIVSHKLMVRAGMIRRVAGGIYNYLPIGLRSIRKVEAIVREEMNRAGAVELLMPAVQPAELWQESGRWEQYGPELLRFKDRKDNDFVIGPTHEEVVTDIARNQIKSYRQMPVNFYQIQTKFRDEIRPRFGVMRGREFIMKDAYSFDKDAEGLRESYRKMYDAYVRIFTRLGLEFRAVAADSGSIGGNFSHEFHVIADTGEDAIAYCPSSEFAANVEAAEALPLIAERAAPAEALTKVATPGKAKCEAVAELLNIPLERTIKSIVLATDNEGAEPTIWLVMLRGDHDLNEIKVSKLPGLKNHRFATEQEIVEWFGTPPGYLGPIGTKKPVKVIADRTVANMSDFVVGANEVDYHIAGVNWGRDLPEPEVADVRNVKKGDPSPDGKGAIDICRGIEVGHVFQLGTKYSEAMGATFLDESGKPQPMLMGCYGIGVTRILGAAIEQNFDDKGIIWPESIAPFEVVLCPMGYDRSDAVREAADKLYAELTAAGIDVILDDRGERPGVMFADWELIGVPHRLVIGERGLKDGKIEYQGRRDTEATLLPAGEAAATVAEKVRAALAH.

It belongs to the class-II aminoacyl-tRNA synthetase family. ProS type 1 subfamily. Homodimer.

It is found in the cytoplasm. It catalyses the reaction tRNA(Pro) + L-proline + ATP = L-prolyl-tRNA(Pro) + AMP + diphosphate. Its function is as follows. Catalyzes the attachment of proline to tRNA(Pro) in a two-step reaction: proline is first activated by ATP to form Pro-AMP and then transferred to the acceptor end of tRNA(Pro). As ProRS can inadvertently accommodate and process non-cognate amino acids such as alanine and cysteine, to avoid such errors it has two additional distinct editing activities against alanine. One activity is designated as 'pretransfer' editing and involves the tRNA(Pro)-independent hydrolysis of activated Ala-AMP. The other activity is designated 'posttransfer' editing and involves deacylation of mischarged Ala-tRNA(Pro). The misacylated Cys-tRNA(Pro) is not edited by ProRS. This chain is Proline--tRNA ligase, found in Burkholderia multivorans (strain ATCC 17616 / 249).